A 619-amino-acid polypeptide reads, in one-letter code: Sorting nexin-41 (619 aa).

The interval 1–95 (MWNDEDNNPY…ELVPRRKPGG (95 aa)) is disordered. The PX domain occupies 108 to 224 (PELPILITEA…WRFLDPNSSW (117 aa)). Residues Arg142, Ser144, Lys168, and Arg191 each contribute to the a 1,2-diacyl-sn-glycero-3-phospho-(1D-myo-inositol-3-phosphate) site. The segment at 444-510 (YLSSSQQIQP…GSPSHKKAAS (67 aa)) is disordered. A compositionally biased stretch (basic and acidic residues) spans 454–467 (PRREPPAQHRRDGS).

Belongs to the sorting nexin family.

It is found in the endosome membrane. The protein resides in the endomembrane system. May be required for cytoplasm to vacuole transport (Cvt) and pexophagy. This chain is Sorting nexin-41 (vsp-6), found in Neurospora crassa (strain ATCC 24698 / 74-OR23-1A / CBS 708.71 / DSM 1257 / FGSC 987).